Consider the following 218-residue polypeptide: N-(5'-phosphoribosyl)anthranilate isomerase (218 aa).

This sequence belongs to the TrpF family.

The catalysed reaction is N-(5-phospho-beta-D-ribosyl)anthranilate = 1-(2-carboxyphenylamino)-1-deoxy-D-ribulose 5-phosphate. Its pathway is amino-acid biosynthesis; L-tryptophan biosynthesis; L-tryptophan from chorismate: step 3/5. The protein is N-(5'-phosphoribosyl)anthranilate isomerase of Halalkalibacterium halodurans (strain ATCC BAA-125 / DSM 18197 / FERM 7344 / JCM 9153 / C-125) (Bacillus halodurans).